Reading from the N-terminus, the 533-residue chain is Apolipoprotein N-acyltransferase (533 aa).

6 helical membrane-spanning segments follow: residues 17-37 (ALLA…FGFF), 74-94 (WLFG…ALLI), 105-125 (LAIL…AVLA), 127-147 (LLWS…GLLE), 178-198 (VIGV…PALL), and 205-225 (VPGI…GYYA). Positions 245–495 (VQPAIDQEAK…QGFVDSTLSG (251 aa)) constitute a CN hydrolase domain. The active-site Proton acceptor is E290. K354 is a catalytic residue. C407 acts as the Nucleophile in catalysis. A helical transmembrane segment spans residues 509–529 (YFWLIIGIVGMIAVISRMGFI).

Belongs to the CN hydrolase family. Apolipoprotein N-acyltransferase subfamily.

It localises to the cell inner membrane. The catalysed reaction is N-terminal S-1,2-diacyl-sn-glyceryl-L-cysteinyl-[lipoprotein] + a glycerophospholipid = N-acyl-S-1,2-diacyl-sn-glyceryl-L-cysteinyl-[lipoprotein] + a 2-acyl-sn-glycero-3-phospholipid + H(+). It participates in protein modification; lipoprotein biosynthesis (N-acyl transfer). Its function is as follows. Catalyzes the phospholipid dependent N-acylation of the N-terminal cysteine of apolipoprotein, the last step in lipoprotein maturation. The sequence is that of Apolipoprotein N-acyltransferase from Rhizobium rhizogenes (strain K84 / ATCC BAA-868) (Agrobacterium radiobacter).